The chain runs to 247 residues: Chymase (247 aa).

Positions 1-19 (MNLHALCLLLLLLGSSTKA) are cleaved as a signal peptide. Residues 20-21 (GE) constitute a propeptide, activation peptide. One can recognise a Peptidase S1 domain in the interval 22–245 (IIGGTECIPH…YRPWINKILR (224 aa)). Cys51 and Cys67 form a disulfide bridge. His66 serves as the catalytic Charge relay system. Residue Asn80 is glycosylated (N-linked (GlcNAc...) asparagine). The Charge relay system role is filled by Asp110. Intrachain disulfides connect Cys144-Cys209 and Cys175-Cys188. Catalysis depends on Ser203, which acts as the Charge relay system.

This sequence belongs to the peptidase S1 family. Granzyme subfamily. As to expression, mast cells.

Its subcellular location is the secreted. It is found in the cytoplasmic granule. It carries out the reaction Preferential cleavage: Phe-|-Xaa &gt; Tyr-|-Xaa &gt; Trp-|-Xaa &gt; Leu-|-Xaa.. Functionally, major secreted protease of mast cells with suspected roles in vasoactive peptide generation, extracellular matrix degradation, and regulation of gland secretion. This is Chymase (Cma1) from Rattus norvegicus (Rat).